Here is a 628-residue protein sequence, read N- to C-terminus: Probable potassium transport system protein Kup 1 (628 aa).

A run of 12 helical transmembrane segments spans residues 18–38 (ITLA…LYAL), 58–78 (IVSL…VLLV), 106–126 (ALLM…AVIT), 141–161 (ITPE…VILF), 175–195 (FGPI…YEIV), 219–239 (IAFI…ALYA), 253–273 (WGSL…ALLL), 285–305 (LLAP…ATVI), 343–363 (IYLP…IIWF), 371–391 (AAYG…LMVV), 401–421 (WLIA…FAAN), and 425–445 (FLAG…VMTT).

The protein belongs to the HAK/KUP transporter (TC 2.A.72) family.

The protein resides in the cell inner membrane. It carries out the reaction K(+)(in) + H(+)(in) = K(+)(out) + H(+)(out). In terms of biological role, transport of potassium into the cell. Likely operates as a K(+):H(+) symporter. This Aeromonas hydrophila subsp. hydrophila (strain ATCC 7966 / DSM 30187 / BCRC 13018 / CCUG 14551 / JCM 1027 / KCTC 2358 / NCIMB 9240 / NCTC 8049) protein is Probable potassium transport system protein Kup 1.